Reading from the N-terminus, the 374-residue chain is MKGCDSLDNLKKTPLYEIYPKYNAKIIDFAGWAMPVQFESIISEHEAVRNAAGLFDVSHMGEIIVKGKDAFPFLQNLLTNDLSKLNDNQVLYTFMCNHNGGVIDDLLVYKYSNNYYLLVVNAANIEKDYKWMLNNAGIYKVEIENVSDKIAELAIQGPKAEEILQKLTDEDLSQIKFFYFKDKVKIAGVECLVSRTGYTGEDGFEIYMPNEHAVTLWEKILEAGKDYGLKPAGLGARDTLRFEAGLPLYGNELGEDITPLEAGLGFFVKFDKGNFIGKDALLKQKEQGLKRKLVGFEMIGNGIPRHGYEVQADNQKIGYVTTGYFSPTLKKNIGLALIDSKYAQIGNQIEVIIRNKPLKAVIVDKNFYKKNYKK.

Belongs to the GcvT family. In terms of assembly, the glycine cleavage system is composed of four proteins: P, T, L and H.

The catalysed reaction is N(6)-[(R)-S(8)-aminomethyldihydrolipoyl]-L-lysyl-[protein] + (6S)-5,6,7,8-tetrahydrofolate = N(6)-[(R)-dihydrolipoyl]-L-lysyl-[protein] + (6R)-5,10-methylene-5,6,7,8-tetrahydrofolate + NH4(+). Its function is as follows. The glycine cleavage system catalyzes the degradation of glycine. This chain is Aminomethyltransferase, found in Caldanaerobacter subterraneus subsp. tengcongensis (strain DSM 15242 / JCM 11007 / NBRC 100824 / MB4) (Thermoanaerobacter tengcongensis).